The chain runs to 320 residues: Aminoacyl tRNA synthase complex-interacting multifunctional protein 2 (320 aa).

Ser-36 carries the post-translational modification Phosphoserine. Residues 82-162 form an interaction with PRKN region; the sequence is TPDADLDVTN…HTHSSVKNVP (81 aa). Residues 162-225 form an interaction with TP53 region; sequence PENLVKCFGE…FLFSLFGQKH (64 aa). Positions 220–317 constitute a GST C-terminal domain; that stretch reads LFGQKHNAVT…NLAPFSTALQ (98 aa).

As to quaternary structure, part of the multisynthetase complex (MSC), a multisubunit complex that groups tRNA ligases for Arg (RARS1), Asp (DARS1), Gln (QARS1), Ile (IARS1), Leu (LARS1), Lys (KARS1), Met (MARS1) the bifunctional ligase for Glu and Pro (EPRS1) and the auxiliary subunits AIMP1/p43, AIMP2/p38 and EEF1E1/p18. Interacts (via N-terminus) with KARS1. Interacts with EPRS1. Forms a linear complex that contains MARS1, EEF1E1, EPRS1 and AIMP2 that is at the core of the multisubunit complex. Binds FUBP1 (via C-terminus). Interacts in both its unphosphorylated and phosphorylated forms with p53/TP53 (via N-terminus) in the nucleus following UV irradiation. Interacts (via N-terminus) with PRKN/parkin (via first RING-type domain). Interacts with TARS3. Post-translationally, phosphorylated on serine residues in response to UV irradiation. Ubiquitinated by PRKN, leading to its degradation by the proteasome.

The protein resides in the cytoplasm. It localises to the cytosol. The protein localises to the nucleus. Required for assembly and stability of the aminoacyl-tRNA synthase complex. Mediates ubiquitination and degradation of FUBP1, a transcriptional activator of MYC, leading to MYC down-regulation which is required for aveolar type II cell differentiation. Blocks MDM2-mediated ubiquitination and degradation of p53/TP53. Functions as a proapoptotic factor. This chain is Aminoacyl tRNA synthase complex-interacting multifunctional protein 2 (Aimp2), found in Mus musculus (Mouse).